We begin with the raw amino-acid sequence, 2184 residues long: MGAQVSTQKTGAHETALNAQGNSVIHYTNINYYKDAASNSANRQDFTQDPSKFTEPVKDVMIKSLPALNSPTVEECGYSDRVRSITLGNSTITTQECANVVVAYGVWPDYLHDDEATAEDQPTQPDVATCRFYTLDSVSWQSSSAGWWWKFPDALSNMGLFGQNMQYHYLGRSGYTIHVQCNASKFHQGCLLVVCVPEAEMGCSNLNNAPLAADLSAGEVARQFTVEPANGQNQVQTAVHNAAMGVAVGNLTIFPHQWINLRTNNSATIVMPYINSVPMDNMFRHNNFTLMIIPFAKLAYSDGASTFVPITVTIAPMNAEYNGLRLAGHQGLPVMTTPGSTQFLTSDDFQSPCAMPQFDVTPEMNIPGQVNNLMEIAEVDSVVPVNNTETNVNGMDAYRIPVQSNMDTGGQVFGFPLQPGASSVFQRTLLGEILNYYTHWSGSIKLTFMFCGSAMATGKFLLAYSPPGAGAPKSRKDAMLGTHVIWDVGLQSSCVLCIPWISQTHYRFVVADEYTAGGFITCWYQTNVIVPLGAQSNCSILCFVSACNDFSVRMLRDTKFISQTAFYQSPVEGAIERAIARVADTMPSGPTNSEAVPALTAVETGHTSQVVPSDNMQTRHVKNYHSRSETSVENFLCRSACVYFTTYKNQTGATNRFASWVITTRQVAQLRRKLEMFTYLRFDIELTFVITSAQDQSTISQDAPVQTHQIMYVPPGGPVPTKVDDYAWQTSTNPSVFWTEGNAPPRMSVPFMSIGNAYSTFYDGWSDFSNKGIYGLNTLNNMGTLYIRHVNGPNPVPITSTVRIYFKPKHVKAWVPRPPRLCQYKTSRQVNFTVTGVTESRANITTMNTTGAFGQQSGAAYVGNYRVVNRHLATHADWQNCVWEDYNRDLLVSTTTAHGCDVIARCQCNTGVYFCASRNKHYPVTFEGPGLVEVQESEYYPKRYQSHVLLAAGFSEPGDCGGILRCEHGVIGLVTMGGEGVVGFADVRDLLWLEDDAMEQGVRDYVEQLGNAFGSGFTNQICEQVNLLKESLVGQDSILEKSLKALVKIISALVIVVRNHDDLITVTATLALIGCTTSPWRWLKQKVSQYYGIPMAERQSNGWLKKFTEMTNACKGMEWIAIKIQKFIEWLKARILPEVKEKHEFLNRLKQLPLLESQIATIEQSAPSQSDQEQLFSNVQYFAHYCRKYAPLYAAEAKRVFSLEKKMSNYIQFKSKCRIEPVCLLLHGSPGAGKSVATSLIGRSLAEKLNSSVYSLPPDPDHFDGYKQQAVVIMDDLCQNPDGKDVSLFCQMVSSVDFVPPMAALEEKGILFTSPFVLASTNAGSINAPTVSDSRALARRFHFDMNIEVISMYSQNGKINMPMSVKTCDEECCPVNFKKCCPLVCGKAIQFIDRRTQVRYSLDMLVTEMFREYNHRHSVGATLEALFQGPPVYREIKISVAPETPPPPAIADLLKSVDSEAVREYCKEKGWLVPEINSTLQIEKHVSRAFICLQALTTFVSVAGIIYIIYKLFAGFQGAYTGMPNQKPKVPTLRQAKVQGPAFEFAVAMMKRNSSTVKTEYGEFTMLGVYDRWAVLPRHAKPGPTILMNDQEVGVLDAKELVDKDGTNLELTLLKLNRNEKFRDIRGFLAKEEVEVNEAVLAINTSKFPNMYIPVGQVTDYGFLNLGGTPTKRMLMYNFPTRAGQCGGVLMSTGKVLGIHVGGNGHQGFSAALLKHYFNDEQGEIEFIESSKDAGFPIINTPSKTKLEPSVFHQVFEGNKEPAVLRNGDPRLKANFEEAIFSKYIGNVNTHVDEYMLEAVDHYAGQLATLDINTEPMKLEDAVYGTEGLEALDLTTSAGYPYVALGIKKRDILSKKSKDLTKLKECMDKYGLNLPMVTYVKDELRSAEKVAKGKSRLIEASSLNDSVAMRQTFGNLYKTFHLNPGIVTGSAVGCDPDLFWSKIPVMLDGHLIAFDYSGYDASLSPVWFACLKLLLEKLGYTHKETNYIDYLCNSHHLYRDKHYFVRGGMPSGCSGTSIFNSMINNIIIRTLMLKVYKGIDLDQFRMIAYGDDVIASYPWPIDASLLAEAGKGYGLIMTPADKGECFNEVTWTNVTFLKRYFRADEQYPFLVHPVMPMKDIHESIRWTKDPKNTQDHVRSLCLLAWHNGEHEYEEFIRKVRSVPVGRCLTLPAFSTLRRKWLDSF.

The N-myristoyl glycine; by host moiety is linked to residue G2. Residues 2 to 1494 are Cytoplasmic-facing; sequence GAQVSTQKTG…HVSRAFICLQ (1493 aa). Positions 566–582 are amphipathic alpha-helix; the sequence is FYQSPVEGAIERAIARV. Active-site for protease 2A activity residues include H871 and D889. C906 and C908 together coordinate Zn(2+). Residue C960 is the For protease 2A activity of the active site. C966 and H968 together coordinate Zn(2+). Residues 1100 to 1172 form a membrane-binding region; that stretch reads SNGWLKKFTE…EQSAPSQSDQ (73 aa). The interval 1100 to 1238 is oligomerization; sequence SNGWLKKFTE…SPGAGKSVAT (139 aa). The interval 1121–1125 is RNA-binding; that stretch reads AIKIQ. The SF3 helicase domain maps to 1204–1360; the sequence is EKKMSNYIQF…SMYSQNGKIN (157 aa). 3 residues coordinate Zn(2+): C1368, C1380, and C1385. The segment at 1368-1385 adopts a C4-type; degenerate zinc-finger fold; it reads CDEECCPVNFKKCCPLVC. Residues 1412 to 1419 form an RNA-binding region; sequence EYNHRHSV. The oligomerization stretch occupies residues 1423–1428; it reads LEALFQ. The stretch at 1495 to 1510 is an intramembrane region; that stretch reads ALTTFVSVAGIIYIIY. Over 1511 to 2184 the chain is Cytoplasmic; it reads KLFAGFQGAY…TLRRKWLDSF (674 aa). An O-(5'-phospho-RNA)-tyrosine modification is found at Y1520. The Peptidase C3 domain maps to 1540 to 1718; that stretch reads GPAFEFAVAM…FSAALLKHYF (179 aa). Active-site for protease 3C activity residues include H1579, E1610, and C1686. The region spanning 1949–2065 is the RdRp catalytic domain; that stretch reads GHLIAFDYSG…SYPWPIDASL (117 aa). The Mg(2+) site is built by D1955 and D2051.

The protein belongs to the picornaviruses polyprotein family. In terms of assembly, interacts with capsid protein VP1 and capsid protein VP3 to form heterotrimeric protomers. Interacts with capsid protein VP0, and capsid protein VP3 to form heterotrimeric protomers. Five protomers subsequently associate to form pentamers which serve as building blocks for the capsid. Interacts with capsid protein VP2, capsid protein VP3 and capsid protein VP4 following cleavage of capsid protein VP0. Interacts with host CXADR. As to quaternary structure, interacts with capsid protein VP1 and capsid protein VP3 in the mature capsid. In terms of assembly, interacts with capsid protein VP0 and capsid protein VP1 to form heterotrimeric protomers. Five protomers subsequently associate to form pentamers which serve as building blocks for the capsid. Interacts with capsid protein VP4 in the mature capsid. Interacts with protein 2C; this interaction may be important for virion morphogenesis. Interacts with capsid protein VP1 and capsid protein VP3. As to quaternary structure, homodimer. In terms of assembly, homohexamer; forms a hexameric ring structure with 6-fold symmetry characteristic of AAA+ ATPases. Interacts (via N-terminus) with host RTN3 (via reticulon domain); this interaction is important for viral replication. Interacts with capsid protein VP3; this interaction may be important for virion morphogenesis. Interacts with protein 3CD. As to quaternary structure, homodimer. Interacts with host GBF1. Interacts (via GOLD domain) with host ACBD3 (via GOLD domain); this interaction allows the formation of a viral protein 3A/ACBD3 heterotetramer with a 2:2 stoichiometry, which will stimulate the recruitment of host PI4KB in order to synthesize PI4P at the viral RNA replication sites. In terms of assembly, interacts with RNA-directed RNA polymerase. Interacts with protein 3AB and with RNA-directed RNA polymerase. As to quaternary structure, interacts with Viral protein genome-linked and with protein 3CD. Mg(2+) serves as cofactor. Specific enzymatic cleavages in vivo by the viral proteases yield processing intermediates and the mature proteins. Post-translationally, myristoylation is required for the formation of pentamers during virus assembly. Further assembly of 12 pentamers and a molecule of genomic RNA generates the provirion. In terms of processing, during virion maturation, immature virions are rendered infectious following cleavage of VP0 into VP4 and VP2. This maturation seems to be an autocatalytic event triggered by the presence of RNA in the capsid and it is followed by a conformational change infectious virion. Myristoylation is required during RNA encapsidation and formation of the mature virus particle. Post-translationally, VPg is uridylylated by the polymerase into VPg-pUpU. This acts as a nucleotide-peptide primer for the genomic RNA replication.

It is found in the virion. It localises to the host cytoplasm. The protein localises to the host cytoplasmic vesicle membrane. The protein resides in the host nucleus. The enzyme catalyses a ribonucleoside 5'-triphosphate + H2O = a ribonucleoside 5'-diphosphate + phosphate + H(+). It carries out the reaction Selective cleavage of Tyr-|-Gly bond in the picornavirus polyprotein.. The catalysed reaction is RNA(n) + a ribonucleoside 5'-triphosphate = RNA(n+1) + diphosphate. It catalyses the reaction Selective cleavage of Gln-|-Gly bond in the poliovirus polyprotein. In other picornavirus reactions Glu may be substituted for Gln, and Ser or Thr for Gly.. Its activity is regulated as follows. Replication or transcription is subject to high level of random mutations by the nucleotide analog ribavirin. Functionally, forms an icosahedral capsid of pseudo T=3 symmetry with capsid proteins VP2 and VP3. The capsid is 300 Angstroms in diameter, composed of 60 copies of each capsid protein and enclosing the viral positive strand RNA genome. Capsid protein VP1 mainly forms the vertices of the capsid. Capsid protein VP1 interacts with host CXADR to provide virion attachment to target host cells. This attachment induces virion internalization. Tyrosine kinases are probably involved in the entry process. After binding to its receptor, the capsid undergoes conformational changes. Capsid protein VP1 N-terminus (that contains an amphipathic alpha-helix) and capsid protein VP4 are externalized. Together, they shape a pore in the host membrane through which viral genome is translocated to host cell cytoplasm. In terms of biological role, forms an icosahedral capsid of pseudo T=3 symmetry with capsid proteins VP2 and VP3. The capsid is 300 Angstroms in diameter, composed of 60 copies of each capsid protein and enclosing the viral positive strand RNA genome. Lies on the inner surface of the capsid shell. After binding to the host receptor, the capsid undergoes conformational changes. Capsid protein VP4 is released, Capsid protein VP1 N-terminus is externalized, and together, they shape a pore in the host membrane through which the viral genome is translocated into the host cell cytoplasm. Its function is as follows. Component of immature procapsids, which is cleaved into capsid proteins VP4 and VP2 after maturation. Allows the capsid to remain inactive before the maturation step. Functionally, cysteine protease that cleaves viral polyprotein and specific host proteins. It is responsible for the autocatalytic cleavage between the P1 and P2 regions, which is the first cleavage occurring in the polyprotein. Also cleaves the host translation initiation factor EIF4G1, in order to shut down the capped cellular mRNA translation. Inhibits the host nucleus-cytoplasm protein and RNA trafficking by cleaving host members of the nuclear pores. Counteracts stress granule formation probably by antagonizing its assembly or promoting its dissassembly. Cleaves and inhibits host IFIH1/MDA5, thereby inhibiting the type-I IFN production and the establishment of the antiviral state. Cleaves and inhibits host MAVS, thereby inhibiting the type-I IFN production and the establishment of the antiviral state. In terms of biological role, plays an essential role in the virus replication cycle by acting as a viroporin. Creates a pore in the host endoplasmic reticulum and as a consequence releases Ca2+ in the cytoplasm of infected cell. In turn, high levels of cytoplasmic calcium may trigger membrane trafficking and transport of viral ER-associated proteins to viroplasms, sites of viral genome replication. Induces and associates with structural rearrangements of intracellular membranes. Displays RNA-binding, nucleotide binding and NTPase activities. May play a role in virion morphogenesis and viral RNA encapsidation by interacting with the capsid protein VP3. Its function is as follows. Localizes the viral replication complex to the surface of membranous vesicles. Together with protein 3CD binds the Cis-Active RNA Element (CRE) which is involved in RNA synthesis initiation. Acts as a cofactor to stimulate the activity of 3D polymerase, maybe through a nucleid acid chaperone activity. Functionally, localizes the viral replication complex to the surface of membranous vesicles. It inhibits host cell endoplasmic reticulum-to-Golgi apparatus transport and causes the disassembly of the Golgi complex, possibly through GBF1 interaction. This would result in depletion of MHC, trail receptors and IFN receptors at the host cell surface. Plays an essential role in viral RNA replication by recruiting ACBD3 and PI4KB at the viral replication sites, thereby allowing the formation of the rearranged membranous structures where viral replication takes place. In terms of biological role, acts as a primer for viral RNA replication and remains covalently bound to viral genomic RNA. VPg is uridylylated prior to priming replication into VPg-pUpU. The oriI viral genomic sequence may act as a template for this. The VPg-pUpU is then used as primer on the genomic RNA poly(A) by the RNA-dependent RNA polymerase to replicate the viral genome. During genome replication, the VPg-RNA linkage is removed by the host TDP2, thereby accelerating replication. During the late stage of the replication cycle, host TDP2 is excluded from sites of viral RNA synthesis and encapsidation, allowing for the generation of progeny virions. Involved in the viral replication complex and viral polypeptide maturation. It exhibits protease activity with a specificity and catalytic efficiency that is different from protease 3C. Protein 3CD lacks polymerase activity. Protein 3CD binds to the 5'UTR of the viral genome. Its function is as follows. Replicates the viral genomic RNA on the surface of intracellular membranes. May form linear arrays of subunits that propagate along a strong head-to-tail interaction called interface-I. Covalently attaches UMP to a tyrosine of VPg, which is used to prime RNA synthesis. The positive stranded RNA genome is first replicated at virus induced membranous vesicles, creating a dsRNA genomic replication form. This dsRNA is then used as template to synthesize positive stranded RNA genomes. ss(+)RNA genomes are either translated, replicated or encapsidated. Functionally, major viral protease that mediates proteolytic processing of the polyprotein. Cleaves host EIF5B, contributing to host translation shutoff. Also cleaves host PABPC1, contributing to host translation shutoff. Cleaves host NLRP1, triggers host N-glycine-mediated degradation of the autoinhibitory NLRP1 N-terminal fragment. The sequence is that of Genome polyprotein from Coxsackievirus B6 (strain Schmitt).